A 575-amino-acid chain; its full sequence is DNA-directed RNA polymerase subunit beta' (575 aa).

Belongs to the RNA polymerase beta' chain family. In terms of assembly, in plastids the minimal PEP RNA polymerase catalytic core is composed of four subunits: alpha, beta, beta', and beta''. When a (nuclear-encoded) sigma factor is associated with the core the holoenzyme is formed, which can initiate transcription.

The protein localises to the plastid. The protein resides in the apicoplast. The catalysed reaction is RNA(n) + a ribonucleoside 5'-triphosphate = RNA(n+1) + diphosphate. Its function is as follows. DNA-dependent RNA polymerase catalyzes the transcription of DNA into RNA using the four ribonucleoside triphosphates as substrates. This Plasmodium falciparum (isolate 3D7) protein is DNA-directed RNA polymerase subunit beta' (rpoC1).